The primary structure comprises 805 residues: MRISTTWLRDYLKLDIPADELAEKIERTAVEVDGVIRPSEGLKKVVVGHVLTCEPHPDSDHLHVCQVDVGESEPLQIVCGAPNVAAGEKVIVALPNSWIGGHTKIKKSKMRGVPSNGMLCALDELGFDEKLVPKEVADGIFILPDDATPGDPVFSYLGMDDEIIDMSVTPNRGDMLSMNGTAHELAAIYDQQPTMPKVDLYEDATTVAADDLHVAVAADEHDVPMYKMRLIKNVTIKPSPLWLQIRIWNAGMRPINNVVDATNYILMQYGQPLHAFDFDQLNDGQINVRLAKAGEHLTTLDGEDRELLTSDLLICSGDQPICLAGTMGGLATEVTDQTTTIALEGAVFDAVKIRKTAHNHDLHSEASMRYERGIDHGMTATALDAAAAMIAELGDGQVASGMVIGRDEDVQPTTVTIDLARINHVLGTELSLDTVSDIFKRLDFPTVVANETFTVTVPSRRWDIHIPADLIEEIARLYGYDNLPATLPTGQPTIGKLNETQQVIRDSRKLMESAGLTQAISYSLTTETKSKAFALHASDVTKLDFPMSSERTTLRLSLVSGLLDDLAYNNARKEHNVALYEEGRVFYSQPEQVRPKEIEHIAGAITGSMVPKSWGVAEQPVDFFQIKGIVAGYLKSLALQDAVSYVATAEHPEMHPGRTADIYVGDQLVGFVGEVHPTTAKAYKIRETYVFELDLTALIALPKARQQYQPISKFPSITRDVAMLIDDDVTNATVVALINKKGGAHLRHVQLFDVYNGSHVPAGKKSLAYTLTYQDQNATLVDDDVTTAFEKVLTALTDELGAEIR.

In terms of domain architecture, tRNA-binding spans 39–154 (SEGLKKVVVG…DDATPGDPVF (116 aa)). Positions 410 to 485 (VQPTTVTIDL…RLYGYDNLPA (76 aa)) constitute a B5 domain. 4 residues coordinate Mg(2+): aspartate 463, aspartate 469, glutamate 472, and glutamate 473. The region spanning 712 to 805 (SKFPSITRDV…LTDELGAEIR (94 aa)) is the FDX-ACB domain.

This sequence belongs to the phenylalanyl-tRNA synthetase beta subunit family. Type 1 subfamily. Tetramer of two alpha and two beta subunits. The cofactor is Mg(2+).

It is found in the cytoplasm. It carries out the reaction tRNA(Phe) + L-phenylalanine + ATP = L-phenylalanyl-tRNA(Phe) + AMP + diphosphate + H(+). The chain is Phenylalanine--tRNA ligase beta subunit from Lactiplantibacillus plantarum (strain ATCC BAA-793 / NCIMB 8826 / WCFS1) (Lactobacillus plantarum).